Consider the following 350-residue polypeptide: uncharacterized protein (350 aa).

May play a role in septum formation. This is an uncharacterized protein from Mycobacterium tuberculosis (strain CDC 1551 / Oshkosh).